We begin with the raw amino-acid sequence, 81 residues long: Three-finger toxin MALT0057C (81 aa).

A signal peptide spans methionine 1–threonine 21. Disulfide bonds link cysteine 24–cysteine 43, cysteine 38–cysteine 60, cysteine 62–cysteine 73, and cysteine 74–cysteine 79.

The protein belongs to the three-finger toxin family. Short-chain subfamily. Type I alpha-neurotoxin sub-subfamily. Expressed by the venom gland.

Its subcellular location is the secreted. In terms of biological role, binds to muscle nicotinic acetylcholine receptor (nAChR) and inhibit acetylcholine from binding to the receptor, thereby impairing neuromuscular transmission. This Micrurus altirostris (Uruguayan coral snake) protein is Three-finger toxin MALT0057C.